Here is a 1374-residue protein sequence, read N- to C-terminus: DNA-directed RNA polymerase subunit beta (1374 aa).

It belongs to the RNA polymerase beta chain family. As to quaternary structure, the RNAP catalytic core consists of 2 alpha, 1 beta, 1 beta' and 1 omega subunit. When a sigma factor is associated with the core the holoenzyme is formed, which can initiate transcription.

It carries out the reaction RNA(n) + a ribonucleoside 5'-triphosphate = RNA(n+1) + diphosphate. Its function is as follows. DNA-dependent RNA polymerase catalyzes the transcription of DNA into RNA using the four ribonucleoside triphosphates as substrates. This is DNA-directed RNA polymerase subunit beta from Rickettsia typhi (strain ATCC VR-144 / Wilmington).